We begin with the raw amino-acid sequence, 398 residues long: Probable RNA methyltransferase sce1580 (398 aa).

Positions 1–24 (MRVPEIPEETASPLRAGDPPAQVA) are disordered. Residue E140 is the Proton acceptor of the active site. One can recognise a Radical SAM core domain in the interval 146–378 (GPARTTLCVS…TLVRRPRGRD (233 aa)). The cysteines at positions 153 and 383 are disulfide-linked. [4Fe-4S] cluster-binding residues include C160, C164, and C167. S-adenosyl-L-methionine-binding positions include 211-212 (GE), S243, 265-267 (SLN), and N340. C383 acts as the S-methylcysteine intermediate in catalysis.

This sequence belongs to the radical SAM superfamily. RlmN family. Requires [4Fe-4S] cluster as cofactor.

The protein localises to the cytoplasm. The chain is Probable RNA methyltransferase sce1580 from Sorangium cellulosum (strain So ce56) (Polyangium cellulosum (strain So ce56)).